The following is a 502-amino-acid chain: Arginine decarboxylase (502 aa).

An N6-(pyridoxal phosphate)lysine modification is found at Lys42. 226-236 (IDIGGGLGIDY) is a substrate binding site.

This sequence belongs to the Orn/Lys/Arg decarboxylase class-II family. SpeA subfamily. It depends on pyridoxal 5'-phosphate as a cofactor. Mg(2+) is required as a cofactor.

It catalyses the reaction L-arginine + H(+) = agmatine + CO2. It functions in the pathway amine and polyamine biosynthesis; agmatine biosynthesis; agmatine from L-arginine: step 1/1. The chain is Arginine decarboxylase from Solanum lycopersicum (Tomato).